Reading from the N-terminus, the 357-residue chain is MGNCESRELVAQAKQNKIINTELDKAKKTDENIIKLLLLGAGESGKSTVLKQMKIIHNSGFSQEEISNKRNVVCANTVQAMGALLDGMKQLQFDFSTRVCNAHEKLIRETLNDKAEYGPFSDAMFNALTELWADKGVQCAYDKREFFYLHDSAKYFFDAIARVHTPNYVPTENDILHTRVPTMGVIEVNFTIKGKFFRVFDVGGQRSQRKKWIHCFDDAKAMIYVASLSEYDQVLLEDNTTNRMHESIQLFKQVINNKYFVNTSVILFLNKIDLFEEKIVTKKRSLGIAFESFSGPSQDLNAAVAFVEKKYRSMAENKEKNIYCHHTCATDTQQVQYVLDAVLDTILSTKLKGCGLY.

The N-myristoyl glycine moiety is linked to residue glycine 2. A lipid anchor (S-palmitoyl cysteine) is attached at cysteine 4. One can recognise a G-alpha domain in the interval 32–357 (NIIKLLLLGA…STKLKGCGLY (326 aa)). The interval 35–48 (KLLLLGAGESGKST) is G1 motif. GTP is bound by residues glutamate 43, serine 44, glycine 45, lysine 46, serine 47, threonine 48, aspartate 151, leucine 176, threonine 182, glycine 204, asparagine 270, lysine 271, aspartate 273, and alanine 329. Mg(2+) is bound at residue serine 47. The interval 174-182 (DILHTRVPT) is G2 motif. Residue threonine 182 participates in Mg(2+) binding. The G3 motif stretch occupies residues 197-206 (FRVFDVGGQR). Residues 266 to 273 (ILFLNKID) form a G4 motif region. The tract at residues 327-332 (TCATDT) is G5 motif.

This sequence belongs to the G-alpha family. In terms of assembly, g proteins are composed of 3 units; alpha, beta and gamma. The alpha chain contains the guanine nucleotide binding site. Mg(2+) is required as a cofactor.

Functionally, guanine nucleotide-binding proteins (G proteins) are involved as modulators or transducers in various transmembrane signaling systems. In Caenorhabditis elegans, this protein is Guanine nucleotide-binding protein alpha-1 subunit (gpa-1).